Consider the following 729-residue polypeptide: Methionine--tRNA ligase (729 aa).

Positions 12–22 match the 'HIGH' region motif; sequence PYVNNIPHLGN. C143, C146, C155, and C158 together coordinate Zn(2+). Positions 330-334 match the 'KMSKS' region motif; sequence KFSKS. K333 provides a ligand contact to ATP. The tRNA-binding domain occupies 565 to 670; it reads FSEQVCLKVV…DNPIPGERII (106 aa).

This sequence belongs to the class-I aminoacyl-tRNA synthetase family. MetG type 1 subfamily. As to quaternary structure, homodimer. Zn(2+) serves as cofactor.

It localises to the cytoplasm. It catalyses the reaction tRNA(Met) + L-methionine + ATP = L-methionyl-tRNA(Met) + AMP + diphosphate. Functionally, is required not only for elongation of protein synthesis but also for the initiation of all mRNA translation through initiator tRNA(fMet) aminoacylation. This chain is Methionine--tRNA ligase, found in Borrelia hermsii (strain HS1 / DAH).